Here is a 476-residue protein sequence, read N- to C-terminus: Dermokine (476 aa).

A signal peptide spans 1–21 (MKFQGPLACLLLALCLGSGEA). Composition is skewed to gly residues over residues 153-169 (SQGG…GGLG), 193-202 (WGQGGNGGPP), 236-259 (GSGG…GSGS), and 268-298 (SSGG…GSRG). Residues 153-351 (SQGGLGGQGQ…ESGIQNSETS (199 aa)) are disordered. Over residues 299-315 (DSGSESSWGSSTGSSSG) the composition is skewed to low complexity. Positions 316–326 (NHGGSGGGNGH) are enriched in gly residues.

This sequence belongs to the dermokine family. In terms of assembly, homooligomer. Seems to be able to homodimerize and homotrimerize. Post-translationally, O-glycosylated. As to expression, expressed in epidermis; in the spinous and granular layers and in placenta. Also found in the epithelia of the small intestine, macrophages of the lung and endothelial cells of the lung. Isoform 15 is expressed in epidermis and placenta. Isoform 1 is expressed in epidermis.

The protein localises to the secreted. In terms of biological role, may act as a soluble regulator of keratinocyte differentiation. This Homo sapiens (Human) protein is Dermokine (DMKN).